A 352-amino-acid polypeptide reads, in one-letter code: Chorismate synthase (352 aa).

Arg-48 is a binding site for NADP(+). Residues Arg-125–Ser-127, Asn-237–Ala-238, Gly-278, Lys-293–Ser-297, and Arg-319 contribute to the FMN site.

It belongs to the chorismate synthase family. Homotetramer. FMNH2 serves as cofactor.

The catalysed reaction is 5-O-(1-carboxyvinyl)-3-phosphoshikimate = chorismate + phosphate. It participates in metabolic intermediate biosynthesis; chorismate biosynthesis; chorismate from D-erythrose 4-phosphate and phosphoenolpyruvate: step 7/7. Catalyzes the anti-1,4-elimination of the C-3 phosphate and the C-6 proR hydrogen from 5-enolpyruvylshikimate-3-phosphate (EPSP) to yield chorismate, which is the branch point compound that serves as the starting substrate for the three terminal pathways of aromatic amino acid biosynthesis. This reaction introduces a second double bond into the aromatic ring system. This Francisella tularensis subsp. holarctica (strain FTNF002-00 / FTA) protein is Chorismate synthase.